Here is a 428-residue protein sequence, read N- to C-terminus: 3-phosphoshikimate 1-carboxyvinyltransferase (428 aa).

3-phosphoshikimate-binding residues include K21, S22, and R26. K21 is a binding site for phosphoenolpyruvate. Phosphoenolpyruvate is bound by residues G91 and R119. 3-phosphoshikimate is bound by residues S164, Q166, D313, and K340. Q166 serves as a coordination point for phosphoenolpyruvate. D313 functions as the Proton acceptor in the catalytic mechanism. Residues R344 and R386 each contribute to the phosphoenolpyruvate site.

It belongs to the EPSP synthase family. Monomer.

Its subcellular location is the cytoplasm. It catalyses the reaction 3-phosphoshikimate + phosphoenolpyruvate = 5-O-(1-carboxyvinyl)-3-phosphoshikimate + phosphate. It participates in metabolic intermediate biosynthesis; chorismate biosynthesis; chorismate from D-erythrose 4-phosphate and phosphoenolpyruvate: step 6/7. Catalyzes the transfer of the enolpyruvyl moiety of phosphoenolpyruvate (PEP) to the 5-hydroxyl of shikimate-3-phosphate (S3P) to produce enolpyruvyl shikimate-3-phosphate and inorganic phosphate. The sequence is that of 3-phosphoshikimate 1-carboxyvinyltransferase from Campylobacter jejuni subsp. jejuni serotype O:23/36 (strain 81-176).